Consider the following 750-residue polypeptide: Photosystem I P700 chlorophyll a apoprotein A1 (750 aa).

8 helical membrane-spanning segments follow: residues 70-93 (VFSA…FHGA), 156-179 (LYCT…FHYH), 195-219 (LNHH…HVSL), 291-309 (IAHH…GHMY), 346-369 (WHAQ…HHMY), 385-411 (LSLF…IFMV), 433-455 (AIIS…LYIH), and 531-549 (FLVH…LILL). Residues Cys573 and Cys582 each contribute to the [4Fe-4S] cluster site. The next 2 membrane-spanning stretches (helical) occupy residues 589–610 (HVFL…HFSW) and 664–686 (LSAY…MFLF). His675 lines the chlorophyll a' pocket. Chlorophyll a contacts are provided by Met683 and Tyr691. A phylloquinone-binding site is contributed by Trp692. A helical transmembrane segment spans residues 724-744 (AVGVTHYLLGGIATTWAFFLA).

This sequence belongs to the PsaA/PsaB family. As to quaternary structure, the PsaA/B heterodimer binds the P700 chlorophyll special pair and subsequent electron acceptors. PSI consists of a core antenna complex that captures photons, and an electron transfer chain that converts photonic excitation into a charge separation. The eukaryotic PSI reaction center is composed of at least 11 subunits. P700 is a chlorophyll a/chlorophyll a' dimer, A0 is one or more chlorophyll a, A1 is one or both phylloquinones and FX is a shared 4Fe-4S iron-sulfur center. serves as cofactor.

The protein localises to the plastid. The protein resides in the chloroplast thylakoid membrane. It catalyses the reaction reduced [plastocyanin] + hnu + oxidized [2Fe-2S]-[ferredoxin] = oxidized [plastocyanin] + reduced [2Fe-2S]-[ferredoxin]. In terms of biological role, psaA and PsaB bind P700, the primary electron donor of photosystem I (PSI), as well as the electron acceptors A0, A1 and FX. PSI is a plastocyanin-ferredoxin oxidoreductase, converting photonic excitation into a charge separation, which transfers an electron from the donor P700 chlorophyll pair to the spectroscopically characterized acceptors A0, A1, FX, FA and FB in turn. Oxidized P700 is reduced on the lumenal side of the thylakoid membrane by plastocyanin. The chain is Photosystem I P700 chlorophyll a apoprotein A1 from Populus trichocarpa (Western balsam poplar).